A 428-amino-acid polypeptide reads, in one-letter code: 3-phosphoshikimate 1-carboxyvinyltransferase (428 aa).

The 3-phosphoshikimate site is built by Lys-19, Ser-20, and Arg-24. Lys-19 contacts phosphoenolpyruvate. Phosphoenolpyruvate contacts are provided by Gly-91 and Arg-119. The 3-phosphoshikimate site is built by Ser-164, Gln-166, Asp-312, and Lys-339. Phosphoenolpyruvate is bound at residue Gln-166. Asp-312 functions as the Proton acceptor in the catalytic mechanism. 2 residues coordinate phosphoenolpyruvate: Arg-343 and Arg-386.

It belongs to the EPSP synthase family. In terms of assembly, monomer.

Its subcellular location is the cytoplasm. The catalysed reaction is 3-phosphoshikimate + phosphoenolpyruvate = 5-O-(1-carboxyvinyl)-3-phosphoshikimate + phosphate. It functions in the pathway metabolic intermediate biosynthesis; chorismate biosynthesis; chorismate from D-erythrose 4-phosphate and phosphoenolpyruvate: step 6/7. Its function is as follows. Catalyzes the transfer of the enolpyruvyl moiety of phosphoenolpyruvate (PEP) to the 5-hydroxyl of shikimate-3-phosphate (S3P) to produce enolpyruvyl shikimate-3-phosphate and inorganic phosphate. This is 3-phosphoshikimate 1-carboxyvinyltransferase from Bacillus licheniformis (strain ATCC 14580 / DSM 13 / JCM 2505 / CCUG 7422 / NBRC 12200 / NCIMB 9375 / NCTC 10341 / NRRL NRS-1264 / Gibson 46).